A 247-amino-acid chain; its full sequence is MLLLINNLILNDVPTPWGLYFQDSSTPNQEGIIELHDNIMFYLVLILCTVSWLLFSIVKDSSKNPLPHKYLVHGQTIEIIWTILPAVVLLIIAFPSFILLYLCDEVISPAMTIKAIGLQWYWRYEYSDFINDSGETIEFESYVIPEDLLEDGQLRLLDTDTSVVCPVNTHIRFIVSAADVIHDFAIPSLGIKVDACPGRLNQVSALIQREGVYYGMCSETCGVAHSAMPIKIEVVSTKEFLTWLNEQ.

Residues 12-38 are Mitochondrial intermembrane-facing; that stretch reads DVPTPWGLYFQDSSTPNQEGIIELHDN. A helical membrane pass occupies residues 39–59; it reads IMFYLVLILCTVSWLLFSIVK. The Mitochondrial matrix portion of the chain corresponds to 60–78; that stretch reads DSSKNPLPHKYLVHGQTIE. The chain crosses the membrane as a helical span at residues 79–101; the sequence is IIWTILPAVVLLIIAFPSFILLY. The Mitochondrial intermembrane segment spans residues 102 to 247; sequence LCDEVISPAM…KEFLTWLNEQ (146 aa). Cu cation-binding residues include His182, Cys217, Glu219, Cys221, His225, and Met228. Glu219 serves as a coordination point for Mg(2+).

This sequence belongs to the cytochrome c oxidase subunit 2 family. As to quaternary structure, component of the cytochrome c oxidase (complex IV, CIV), a multisubunit enzyme composed of a catalytic core of 3 subunits and several supernumerary subunits. The complex exists as a monomer or a dimer and forms supercomplexes (SCs) in the inner mitochondrial membrane with ubiquinol-cytochrome c oxidoreductase (cytochrome b-c1 complex, complex III, CIII). Cu cation is required as a cofactor. In terms of processing, the signal sequence of COX2 is processed by IMP1.

The protein localises to the mitochondrion inner membrane. It catalyses the reaction 4 Fe(II)-[cytochrome c] + O2 + 8 H(+)(in) = 4 Fe(III)-[cytochrome c] + 2 H2O + 4 H(+)(out). Its function is as follows. Component of the cytochrome c oxidase, the last enzyme in the mitochondrial electron transport chain which drives oxidative phosphorylation. The respiratory chain contains 3 multisubunit complexes succinate dehydrogenase (complex II, CII), ubiquinol-cytochrome c oxidoreductase (cytochrome b-c1 complex, complex III, CIII) and cytochrome c oxidase (complex IV, CIV), that cooperate to transfer electrons derived from NADH and succinate to molecular oxygen, creating an electrochemical gradient over the inner membrane that drives transmembrane transport and the ATP synthase. Cytochrome c oxidase is the component of the respiratory chain that catalyzes the reduction of oxygen to water. Electrons originating from reduced cytochrome c in the intermembrane space (IMS) are transferred via the dinuclear copper A center (CU(A)) of subunit 2 and heme A of subunit 1 to the active site in subunit 1, a binuclear center (BNC) formed by heme A3 and copper B (CU(B)). The BNC reduces molecular oxygen to 2 water molecules using 4 electrons from cytochrome c in the IMS and 4 protons from the mitochondrial matrix. The protein is Cytochrome c oxidase subunit 2 (COX2) of Cyberlindnera mrakii (Yeast).